A 1038-amino-acid chain; its full sequence is Ras GTPase-activating protein 1 (1038 aa).

M1 is subject to N-acetylmethionine. The segment covering 1–16 (MMAAEAGSEEGGPATA) has biased composition (low complexity). Disordered regions lie at residues 1–24 (MMAAEAGSEEGGPATAGTGGAAAT) and 117–152 (ETLGPGGGFPPLPPPPLLPPLGSGLGTVDEGDSLDG). Residues 124-135 (GFPPLPPPPLLP) are compositionally biased toward pro residues. The SH2 1 domain maps to 172–263 (WYHGKLDRTI…LKGEKLLYPV (92 aa)). Residues 270-332 (EDRRRVRAIL…VEDLVEEVGR (63 aa)) enclose the SH3 domain. In terms of domain architecture, SH2 2 spans 342–432 (WFHGKISKQE…VEGYYLKEPV (91 aa)). Residues 465–568 (NIVKKGYLLK…WMKGLQAFCS (104 aa)) enclose the PH domain. The region spanning 568–681 (SLRKSSPGTS…QKGHATDEWF (114 aa)) is the C2 domain. Y606 is subject to Phosphotyrosine. Residues 755–965 (KLESLLLCTL…HRMIMFLDEL (211 aa)) enclose the Ras-GAP domain. S822 carries the post-translational modification Phosphoserine.

In terms of assembly, interacts with SQSTM1. Interacts with SPSB1; the interaction does not promote degradation. Interacts with CAV2 (tyrosine phosphorylated form). Directly interacts with NCK1. Interacts with PDGFRB (tyrosine phosphorylated). Interacts (via SH2 domain) with the 'Tyr-9' phosphorylated form of PDPK1. Interacts with tyrosine-phosphorylated EPHB4. In terms of processing, phosphorylated by SRC and LCK. The phosphorylation SRC inhibits its ability to stimulate the Ras-GTPase activity, whereas phosphorylation by LCK does not display any effect on stimulation activity.

The protein localises to the cytoplasm. Its function is as follows. Inhibitory regulator of the Ras-cyclic AMP pathway. Stimulates the GTPase of normal but not oncogenic Ras p21. This is Ras GTPase-activating protein 1 (Rasa1) from Rattus norvegicus (Rat).